The primary structure comprises 444 residues: Signal recognition particle 54 kDa protein (444 aa).

GTP-binding positions include 102-109, 184-188, and 244-247; these read GVQGSGKT, DTAGR, and SKMD.

This sequence belongs to the GTP-binding SRP family. SRP54 subfamily. In terms of assembly, part of the signal recognition particle protein translocation system, which is composed of SRP and FtsY. Archaeal SRP consists of a 7S RNA molecule of 300 nucleotides and two protein subunits: SRP54 and SRP19.

The protein resides in the cytoplasm. The catalysed reaction is GTP + H2O = GDP + phosphate + H(+). Its function is as follows. Involved in targeting and insertion of nascent membrane proteins into the cytoplasmic membrane. Binds to the hydrophobic signal sequence of the ribosome-nascent chain (RNC) as it emerges from the ribosomes. The SRP-RNC complex is then targeted to the cytoplasmic membrane where it interacts with the SRP receptor FtsY. The sequence is that of Signal recognition particle 54 kDa protein from Sulfolobus acidocaldarius (strain ATCC 33909 / DSM 639 / JCM 8929 / NBRC 15157 / NCIMB 11770).